The following is a 269-amino-acid chain: Phosphatidylglycerol--prolipoprotein diacylglyceryl transferase (269 aa).

Transmembrane regions (helical) follow at residues 21–41 (WYGI…VLEG), 54–74 (LLLY…VVFE), and 88–108 (IWDG…VILI). An a 1,2-diacyl-sn-glycero-3-phospho-(1'-sn-glycerol)-binding site is contributed by Arg-136. 2 consecutive transmembrane segments (helical) span residues 206–226 (GEVV…IEGM) and 236–256 (LRVS…AIFY).

Belongs to the Lgt family.

Its subcellular location is the cell membrane. It catalyses the reaction L-cysteinyl-[prolipoprotein] + a 1,2-diacyl-sn-glycero-3-phospho-(1'-sn-glycerol) = an S-1,2-diacyl-sn-glyceryl-L-cysteinyl-[prolipoprotein] + sn-glycerol 1-phosphate + H(+). The protein operates within protein modification; lipoprotein biosynthesis (diacylglyceryl transfer). Its function is as follows. Catalyzes the transfer of the diacylglyceryl group from phosphatidylglycerol to the sulfhydryl group of the N-terminal cysteine of a prolipoprotein, the first step in the formation of mature lipoproteins. In Ligilactobacillus salivarius (strain UCC118) (Lactobacillus salivarius), this protein is Phosphatidylglycerol--prolipoprotein diacylglyceryl transferase.